Consider the following 237-residue polypeptide: Ribosomal RNA small subunit methyltransferase G (237 aa).

Residues Gly-78, Phe-83, 129 to 130 (AE), and Arg-148 each bind S-adenosyl-L-methionine. Residues 218 to 237 (KKETPRKYPRKAGTPNKKPL) are disordered.

The protein belongs to the methyltransferase superfamily. RNA methyltransferase RsmG family.

The protein localises to the cytoplasm. Functionally, specifically methylates the N7 position of a guanine in 16S rRNA. The chain is Ribosomal RNA small subunit methyltransferase G from Streptococcus uberis (strain ATCC BAA-854 / 0140J).